Here is a 522-residue protein sequence, read N- to C-terminus: Ribonuclease Y (522 aa).

Residues 2–22 (WVEILVGSSAAIISGAAGYLL) traverse the membrane as a helical segment. The 67-residue stretch at 212–278 (LINTVSIPSE…TKVIELLVED (67 aa)) folds into the KH domain. Residues 338–431 (ALGHSLEVAH…VCAADTLSAA (94 aa)) enclose the HD domain.

It belongs to the RNase Y family.

The protein localises to the cell membrane. In terms of biological role, endoribonuclease that initiates mRNA decay. The polypeptide is Ribonuclease Y (Nitratiruptor sp. (strain SB155-2)).